A 346-amino-acid polypeptide reads, in one-letter code: Sensor histidine kinase GraS (346 aa).

Transmembrane regions (helical) follow at residues 15–35 and 43–63; these read MNWI…SLID and LFYI…LTYF. In terms of domain architecture, Histidine kinase spans 126-332; the sequence is EFVHDIKTPV…TVRLIFPLQN (207 aa).

In terms of assembly, interacts with GraX.

Its subcellular location is the cell membrane. The catalysed reaction is ATP + protein L-histidine = ADP + protein N-phospho-L-histidine.. Member of the two-component regulatory system GraR/GraS involved in resistance against cationic antimicrobial peptides (CAMPs). Functions as a sensor protein kinase which phosphorylates GraR through the auxiliary protein GraX. In turn, GraR up-regulates many genes such as adhesins, exoproteins, transporters, toxins, and proteins involved in cell wall synthesis. Down-regulates the expression of many genes involved in RNA and amino acid synthesis or glycolysis. The sequence is that of Sensor histidine kinase GraS (graS) from Staphylococcus aureus (strain Mu50 / ATCC 700699).